Here is a 294-residue protein sequence, read N- to C-terminus: 4-hydroxy-tetrahydrodipicolinate synthase (294 aa).

Residue Thr-45 participates in pyruvate binding. Tyr-133 (proton donor/acceptor) is an active-site residue. Lys-161 acts as the Schiff-base intermediate with substrate in catalysis. Residue Ile-203 coordinates pyruvate.

It belongs to the DapA family. As to quaternary structure, homotetramer; dimer of dimers.

Its subcellular location is the cytoplasm. It catalyses the reaction L-aspartate 4-semialdehyde + pyruvate = (2S,4S)-4-hydroxy-2,3,4,5-tetrahydrodipicolinate + H2O + H(+). Its pathway is amino-acid biosynthesis; L-lysine biosynthesis via DAP pathway; (S)-tetrahydrodipicolinate from L-aspartate: step 3/4. Functionally, catalyzes the condensation of (S)-aspartate-beta-semialdehyde [(S)-ASA] and pyruvate to 4-hydroxy-tetrahydrodipicolinate (HTPA). In Shewanella sp. (strain MR-7), this protein is 4-hydroxy-tetrahydrodipicolinate synthase.